A 351-amino-acid chain; its full sequence is Probable cell division control protein 7 homolog 2 (351 aa).

Positions 21–341 constitute a Protein kinase domain; sequence YTPIEKIGEG…ASDALSHPFF (321 aa). Residues 27–35 and Lys-50 each bind ATP; that span reads IGEGSFSVV. The Proton acceptor role is filled by Asp-137.

It belongs to the protein kinase superfamily. Ser/Thr protein kinase family. CDC7 subfamily. Mg(2+) is required as a cofactor.

The catalysed reaction is L-seryl-[protein] + ATP = O-phospho-L-seryl-[protein] + ADP + H(+). It carries out the reaction L-threonyl-[protein] + ATP = O-phospho-L-threonyl-[protein] + ADP + H(+). Functionally, serine/threonine-protein kinase. Needed for the initiation of DNA synthesis during mitosis as well as for synaptonemal complex formation and commitment to recombination during meiosis. The protein is Probable cell division control protein 7 homolog 2 (CDC7-2) of Encephalitozoon cuniculi (strain GB-M1) (Microsporidian parasite).